We begin with the raw amino-acid sequence, 132 residues long: D-ribose pyranase (132 aa).

The active-site Proton donor is His-20. Residues Asp-28, His-99, and Tyr-121–Asn-123 each bind substrate.

Belongs to the RbsD / FucU family. RbsD subfamily. As to quaternary structure, homodecamer.

Its subcellular location is the cytoplasm. It carries out the reaction beta-D-ribopyranose = beta-D-ribofuranose. It participates in carbohydrate metabolism; D-ribose degradation; D-ribose 5-phosphate from beta-D-ribopyranose: step 1/2. Functionally, catalyzes the interconversion of beta-pyran and beta-furan forms of D-ribose. In Chromobacterium violaceum (strain ATCC 12472 / DSM 30191 / JCM 1249 / CCUG 213 / NBRC 12614 / NCIMB 9131 / NCTC 9757 / MK), this protein is D-ribose pyranase.